Consider the following 217-residue polypeptide: Adenylate kinase (217 aa).

10 to 15 (GAGKGT) provides a ligand contact to ATP. The NMP stretch occupies residues 30-59 (STGDMFRAAIKEGTELGLQAKSFMDQGALV). AMP contacts are provided by residues threonine 31, arginine 36, 57–59 (ALV), 85–88 (GFPR), and glutamine 92. The LID stretch occupies residues 126 to 163 (GRRICKTCGASYHLIFNPPAEEGKCDKDGGELYTRADD). ATP is bound at residue arginine 127. Positions 130 and 133 each coordinate Zn(2+). 136–137 (SY) provides a ligand contact to ATP. Cysteine 150 and aspartate 153 together coordinate Zn(2+). AMP is bound by residues arginine 160 and arginine 171. ATP is bound at residue glutamine 199.

The protein belongs to the adenylate kinase family. As to quaternary structure, monomer.

It is found in the cytoplasm. The enzyme catalyses AMP + ATP = 2 ADP. It functions in the pathway purine metabolism; AMP biosynthesis via salvage pathway; AMP from ADP: step 1/1. Its function is as follows. Catalyzes the reversible transfer of the terminal phosphate group between ATP and AMP. Plays an important role in cellular energy homeostasis and in adenine nucleotide metabolism. In Lysinibacillus sphaericus (strain C3-41), this protein is Adenylate kinase.